Here is a 219-residue protein sequence, read N- to C-terminus: MHFIFYLILLVSAADYGNFGTYPKVPKTASINGFADPIYDLLPDCAKECVKFSTSNTPCPYWDTGCFCVMPQWAGLVGQCVAQKCKGEDVASARFLATSLCSVVGANTWMMPASISSMLSTAAGDAKEVTTIEGKTAKSWVTAPGSAAGSVVSETGSASETGSSESAQSTTTGSSSTGSSSTDSSSSSSSSPSSSANFAVLQTGGIGSVILGFMMYLLV.

An N-terminal signal peptide occupies residues 1 to 13; it reads MHFIFYLILLVSA. One can recognise a CFEM domain in the interval 17 to 126; it reads GNFGTYPKVP…SMLSTAAGDA (110 aa). Disulfide bonds link Cys45/Cys85, Cys49/Cys80, Cys59/Cys66, and Cys68/Cys101. Asp63 serves as a coordination point for heme. The interval 151-194 is disordered; sequence VVSETGSASETGSSESAQSTTTGSSSTGSSSTDSSSSSSSSPSS. Low complexity predominate over residues 153-194; it reads SETGSASETGSSESAQSTTTGSSSTGSSSTDSSSSSSSSPSS. The GPI-anchor amidated serine moiety is linked to residue Ser194. A propeptide spans 195–219 (removed in mature form); that stretch reads SANFAVLQTGGIGSVILGFMMYLLV.

It belongs to the RBT5 family. Interacts with RBT5. The GPI-anchor is attached to the protein in the endoplasmic reticulum and serves to target the protein to the cell surface. There, the glucosamine-inositol phospholipid moiety is cleaved off and the GPI-modified mannoprotein is covalently attached via its lipidless GPI glycan remnant to the 1,6-beta-glucan of the outer cell wall layer.

The protein resides in the secreted. It is found in the cell wall. The protein localises to the cell membrane. In terms of biological role, GPI-linked hyphal surface heme-binding protein involved in heme-iron utilization. Heme transfer occurs between PGA7, RBT5 and CSA2 supporting a model in which the 3 CFEM proteins cooperate in a heme-acquisition system and form a cross-cell wall heme-transfer cascade. The ability to acquire iron from host tissues is a major virulence factor of pathogenic microorganisms. Required for biofilm formation. This Candida albicans (strain SC5314 / ATCC MYA-2876) (Yeast) protein is GPI-anchored hemophore PGA7.